We begin with the raw amino-acid sequence, 397 residues long: Cercosporin biosynthesis regulatory protein CTB8 (397 aa).

A DNA-binding region (zn(2)-C6 fungal-type) is located at residues 26–53 (CTHCSSQKIRCTKERPACARCVNKGLLC). Disordered stretches follow at residues 63–90 (TRRH…APDS) and 173–198 (AEAS…ATTH). Residues 74-87 (PETTISNAPTSSVA) show a composition bias toward polar residues. The segment covering 179 to 197 (PSSSSSPPSQRSDGGRATT) has biased composition (low complexity).

It localises to the nucleus. Functionally, transcription regulator of the gene cluster that mediates the biosynthesis of cercosporin, a light-activated, non-host-selective toxin. The perylenequinone chromophore of cercosporin absorbs light energy to attain an electronically-activated triplet state and produces active oxygen species such as the hydroxyl radical, superoxide, hydrogen peroxide or singlet oxygen upon reaction with oxygen molecules. These reactive oxygen species cause damage to various cellular components including lipids, proteins and nucleic acids. This Cercospora beticola (Sugarbeet leaf spot fungus) protein is Cercosporin biosynthesis regulatory protein CTB8.